The following is a 116-amino-acid chain: Protein Rev (116 aa).

A phosphoserine; by host CK2 mark is found at S5 and S8. Residues 18–26 (LIKFLYQSN) are homomultimerization. The interval 23-48 (YQSNPPPKPEGTRQARRNRRRRWRER) is disordered. A Nuclear localization signal and RNA-binding (RRE) motif is present at residues 34–50 (TRQARRNRRRRWRERQR). A compositionally biased stretch (basic residues) spans 36 to 47 (QARRNRRRRWRE). Positions 73–84 (LQLPPLERLTLD) match the Nuclear export signal and binding to XPO1 motif. S92 and S99 each carry phosphoserine; by host. The tract at residues 92–116 (SGTQGVGSPQILVESPTVLESGTKE) is disordered.

It belongs to the HIV-1 REV protein family. Homomultimer; when bound to the RRE. Multimeric assembly is essential for activity and may involve XPO1. Binds to human KPNB1, XPO1, TNPO1, RANBP5 and IPO7. Interacts with the viral Integrase. Interacts with human KHDRBS1. Interacts with human NAP1; this interaction decreases Rev multimerization and stimulates its activity. Interacts with human DEAD-box helicases DDX3 and DDX24; these interactions may serve for viral RNA export to the cytoplasm and packaging, respectively. Interacts with human PSIP1; this interaction may inhibit HIV-1 DNA integration by promoting dissociation of the Integrase-LEDGF/p75 complex. Asymmetrically arginine dimethylated at one site by host PRMT6. Methylation impairs the RNA-binding activity and export of viral RNA from the nucleus to the cytoplasm. Post-translationally, phosphorylated by protein kinase CK2. Presence of, and maybe binding to the N-terminus of the regulatory beta subunit of CK2 is necessary for CK2-mediated Rev's phosphorylation.

It is found in the host nucleus. It localises to the host nucleolus. The protein resides in the host cytoplasm. Its function is as follows. Escorts unspliced or incompletely spliced viral pre-mRNAs (late transcripts) out of the nucleus of infected cells. These pre-mRNAs carry a recognition sequence called Rev responsive element (RRE) located in the env gene, that is not present in fully spliced viral mRNAs (early transcripts). This function is essential since most viral proteins are translated from unspliced or partially spliced pre-mRNAs which cannot exit the nucleus by the pathway used by fully processed cellular mRNAs. Rev itself is translated from a fully spliced mRNA that readily exits the nucleus. Rev's nuclear localization signal (NLS) binds directly to KPNB1/Importin beta-1 without previous binding to KPNA1/Importin alpha-1. KPNB1 binds to the GDP bound form of RAN (Ran-GDP) and targets Rev to the nucleus. In the nucleus, the conversion from Ran-GDP to Ran-GTP dissociates Rev from KPNB1 and allows Rev's binding to the RRE in viral pre-mRNAs. Rev multimerization on the RRE via cooperative assembly exposes its nuclear export signal (NES) to the surface. Rev can then form a complex with XPO1/CRM1 and Ran-GTP, leading to nuclear export of the complex. Conversion from Ran-GTP to Ran-GDP mediates dissociation of the Rev/RRE/XPO1/RAN complex, so that Rev can return to the nucleus for a subsequent round of export. Beside KPNB1, also seems to interact with TNPO1/Transportin-1, RANBP5/IPO5 and IPO7/RANBP7 for nuclear import. The nucleoporin-like HRB/RIP is an essential cofactor that probably indirectly interacts with Rev to release HIV RNAs from the perinuclear region to the cytoplasm. The chain is Protein Rev from Human immunodeficiency virus type 1 group M subtype B (isolate SC) (HIV-1).